A 20-amino-acid chain; its full sequence is uncharacterized protein (20 aa).

This is an uncharacterized protein from Serratia marcescens.